The following is a 178-amino-acid chain: Fatty-acid and retinol-binding protein 1 (178 aa).

The first 16 residues, 1–16 (MYHQLILMALIGVIMA), serve as a signal peptide directing secretion. N-linked (GlcNAc...) asparagine glycosylation is found at asparagine 44 and asparagine 75. Coiled-coil stretches lie at residues 67–89 (DAALEALKNKSDKLYQKAVELRN) and 123–154 (KLDMEKIKQAARDIIAKYEALNEETKEELKAT). An N-linked (GlcNAc...) asparagine glycan is attached at asparagine 157.

Belongs to the fatty-acid and retinol-binding protein (FARBP) family. N-glycosylated.

The protein localises to the secreted. Its function is as follows. Binds retinol and different fatty acids. This Onchocerca gutturosa protein is Fatty-acid and retinol-binding protein 1.